The following is a 330-amino-acid chain: Ketol-acid reductoisomerase (NADP(+)) (330 aa).

The KARI N-terminal Rossmann domain occupies 1–181 (MNAYYEQDAD…GGTKAGVIET (181 aa)). NADP(+) contacts are provided by residues 24 to 27 (FGSQ), Arg47, Ser50, Ser52, and 82 to 85 (DQYQ). His107 is an active-site residue. Gly133 is a binding site for NADP(+). Residues 182–327 (TFKNETETDL…AKLRDMMSWL (146 aa)) form the KARI C-terminal knotted domain. Asp190, Glu194, Glu226, and Glu230 together coordinate Mg(2+). Ser251 serves as a coordination point for substrate.

This sequence belongs to the ketol-acid reductoisomerase family. The cofactor is Mg(2+).

The enzyme catalyses (2R)-2,3-dihydroxy-3-methylbutanoate + NADP(+) = (2S)-2-acetolactate + NADPH + H(+). It carries out the reaction (2R,3R)-2,3-dihydroxy-3-methylpentanoate + NADP(+) = (S)-2-ethyl-2-hydroxy-3-oxobutanoate + NADPH + H(+). It participates in amino-acid biosynthesis; L-isoleucine biosynthesis; L-isoleucine from 2-oxobutanoate: step 2/4. It functions in the pathway amino-acid biosynthesis; L-valine biosynthesis; L-valine from pyruvate: step 2/4. Involved in the biosynthesis of branched-chain amino acids (BCAA). Catalyzes an alkyl-migration followed by a ketol-acid reduction of (S)-2-acetolactate (S2AL) to yield (R)-2,3-dihydroxy-isovalerate. In the isomerase reaction, S2AL is rearranged via a Mg-dependent methyl migration to produce 3-hydroxy-3-methyl-2-ketobutyrate (HMKB). In the reductase reaction, this 2-ketoacid undergoes a metal-dependent reduction by NADPH to yield (R)-2,3-dihydroxy-isovalerate. In Chlorobium phaeobacteroides (strain BS1), this protein is Ketol-acid reductoisomerase (NADP(+)).